The chain runs to 227 residues: Transmembrane emp24 domain-containing protein 1 (227 aa).

The N-terminal stretch at 1 to 23 (MMAAGTALGLALWLLLPPVGVGG) is a signal peptide. At 24 to 194 (AGPPPIQDGE…LQEGNLERVN (171 aa)) the chain is on the extracellular side. The region spanning 43–125 (KQCFYQSAPA…EKLVFFELIF (83 aa)) is the GOLD domain. Residues 145–170 (EILEVKMEDIKESIETMRIRLERSIQ) are a coiled coil. Residues 195-215 (FWSAVNVAVLLLVAVLQVCTL) form a helical membrane-spanning segment. The Cytoplasmic portion of the chain corresponds to 216-227 (KRFFQDKRPVPM). The short motif at 218–219 (FF) is the COPII vesicle coat-binding element. A COPI vesicle coat-binding motif is present at residues 218–227 (FFQDKRPVPM).

The protein belongs to the EMP24/GP25L family. In terms of assembly, homodimer in endoplasmic reticulum, endoplasmic reticulum-Golgi intermediate compartment and cis-Golgi network. Interacts with IL1RL1. Interacts with RNF26; this interaction is important to modulate innate immune signaling through the cGAS-STING pathway.

It is found in the cell membrane. The protein resides in the endoplasmic reticulum membrane. It localises to the golgi apparatus. Its subcellular location is the cis-Golgi network membrane. The protein localises to the endoplasmic reticulum-Golgi intermediate compartment membrane. Functionally, potential role in vesicular protein trafficking, mainly in the early secretory pathway. May act as a cargo receptor at the lumenal side for incorporation of secretory cargo molecules into transport vesicles and may be involved in vesicle coat formation at the cytoplasmic side. Plays a positive role in IL-33-mediated IL-8 and IL-6 production by interacting with interleukin-33 receptor IL1RL1. Plays also a role in the modulation of innate immune signaling through the cGAS-STING pathway by interacting with RNF26. This Bos taurus (Bovine) protein is Transmembrane emp24 domain-containing protein 1 (TMED1).